A 325-amino-acid chain; its full sequence is GTPase Era (325 aa).

The Era-type G domain maps to 30-198; the sequence is HCGFVAIVGR…KKHVRDHLPK (169 aa). A G1 region spans residues 38 to 45; sequence GRPNVGKS. Position 38-45 (38-45) interacts with GTP; it reads GRPNVGKS. A G2 region spans residues 64 to 68; sequence QTTRH. The interval 85-88 is G3; it reads DTPG. GTP-binding positions include 85–89 and 147–150; these read DTPGL and NKVD. The segment at 147–150 is G4; sequence NKVD. The tract at residues 177–179 is G5; the sequence is ISA. Positions 221 to 307 constitute a KH type-2 domain; the sequence is VREKLMRFTG…YLETWVKVKS (87 aa).

Belongs to the TRAFAC class TrmE-Era-EngA-EngB-Septin-like GTPase superfamily. Era GTPase family. Monomer.

It localises to the cytoplasm. It is found in the cell inner membrane. Its function is as follows. An essential GTPase that binds both GDP and GTP, with rapid nucleotide exchange. Plays a role in 16S rRNA processing and 30S ribosomal subunit biogenesis and possibly also in cell cycle regulation and energy metabolism. This is GTPase Era from Vibrio cholerae serotype O1 (strain ATCC 39315 / El Tor Inaba N16961).